Here is a 304-residue protein sequence, read N- to C-terminus: Protein PagO (304 aa).

Helical transmembrane passes span 4 to 24 (VSISILFMLVSLTWGTTWLAM), 34 to 54 (VFATGMRFMFAAPFLIIIAWL), 67 to 87 (LFQFVICIFYFCIPFSLMIYG), 95 to 115 (LAAIIFANMPVAVLIASVLFL), 119 to 139 (AKLMQIAGLTIAITALTGILL), 150 to 170 (WQGITALISAVLIHAIIYTQC), 180 to 200 (ITFNALPCLLAGLILSATGWF), 214 to 234 (ILATLYLGAFAGVFGILCYFA), 246 to 266 (LVFLIFPLIAVSLEDYIYGYA), and 267 to 287 (ISTHSMLLIIPLVIGIFLTLV). EamA domains lie at 15 to 139 (LTWG…GILL) and 161 to 287 (LIHA…LTLV).

Belongs to the EamA transporter family.

The protein resides in the cell membrane. The polypeptide is Protein PagO (pagO) (Salmonella typhimurium (strain LT2 / SGSC1412 / ATCC 700720)).